Consider the following 132-residue polypeptide: Small ribosomal subunit protein uS8 (132 aa).

The protein belongs to the universal ribosomal protein uS8 family. Part of the 30S ribosomal subunit. Contacts proteins S5 and S12.

In terms of biological role, one of the primary rRNA binding proteins, it binds directly to 16S rRNA central domain where it helps coordinate assembly of the platform of the 30S subunit. This Streptococcus equi subsp. equi (strain 4047) protein is Small ribosomal subunit protein uS8.